The primary structure comprises 122 residues: Large ribosomal subunit protein uL14 (122 aa).

This sequence belongs to the universal ribosomal protein uL14 family. Part of the 50S ribosomal subunit. Forms a cluster with proteins L3 and L19. In the 70S ribosome, L14 and L19 interact and together make contacts with the 16S rRNA in bridges B5 and B8.

Functionally, binds to 23S rRNA. Forms part of two intersubunit bridges in the 70S ribosome. The polypeptide is Large ribosomal subunit protein uL14 (Rubrobacter xylanophilus (strain DSM 9941 / JCM 11954 / NBRC 16129 / PRD-1)).